The sequence spans 126 residues: Holo-[acyl-carrier-protein] synthase (126 aa).

Residues aspartate 9 and glutamate 58 each contribute to the Mg(2+) site.

It belongs to the P-Pant transferase superfamily. AcpS family. Mg(2+) serves as cofactor.

The protein localises to the cytoplasm. The enzyme catalyses apo-[ACP] + CoA = holo-[ACP] + adenosine 3',5'-bisphosphate + H(+). In terms of biological role, transfers the 4'-phosphopantetheine moiety from coenzyme A to a Ser of acyl-carrier-protein. This is Holo-[acyl-carrier-protein] synthase from Yersinia pseudotuberculosis serotype I (strain IP32953).